The primary structure comprises 250 residues: UPF0259 membrane protein SG1383 (250 aa).

The next 6 membrane-spanning stretches (helical) occupy residues Phe20–Ala40, Ala86–Ile106, Ile121–Leu141, Leu146–Ile166, Leu191–Thr211, and Leu219–Tyr239.

The protein belongs to the UPF0259 family.

Its subcellular location is the cell inner membrane. The protein is UPF0259 membrane protein SG1383 of Sodalis glossinidius (strain morsitans).